We begin with the raw amino-acid sequence, 1926 residues long: Rho GTPase-activating protein 21-A (1926 aa).

Residues 1 to 41 (MATRRAIVPEQQQEPSSPASEISKNKDGQEQSEMVSPMEEE) form a disordered region. Positions 10–22 (EQQQEPSSPASEI) are enriched in polar residues. One can recognise a PDZ domain in the interval 77–162 (HTSIKDEENG…TLELSVMPKD (86 aa)). 6 disordered regions span residues 211-236 (VEVP…TTQP), 353-378 (PTAQ…QIDW), 416-487 (TDYN…RSES), 571-592 (QPTR…DRSG), 640-704 (FQRK…DSDA), and 868-905 (GKLG…DVFS). Composition is skewed to polar residues over residues 216-236 (SGTS…TTQP), 353-372 (PTAQ…SPGP), and 416-429 (TDYN…FSGQ). Positions 441 to 451 (QQSVQMRQRSV) are enriched in low complexity. Positions 452-466 (SQERLEDPVLMKEWP) are enriched in basic and acidic residues. Over residues 468–479 (SASQDTLSSAVA) the composition is skewed to polar residues. Positions 640–669 (FQRKTQTESASGFQLDSVKTSMSASSSPPA) are enriched in polar residues. In terms of domain architecture, PH spans 906–1019 (DSNKEGFLYF…WIKAIQENGN (114 aa)). Residues 1044-1064 (MSSASNKSEQSPKAPRQTLSI) are compositionally biased toward polar residues. Positions 1044 to 1107 (MSSASNKSEQ…SPPKDKGSWR (64 aa)) are disordered. Over residues 1083–1105 (PKQESERRLFSKDDISPPKDKGS) the composition is skewed to basic and acidic residues. The Rho-GAP domain occupies 1126–1318 (VRLDDCPPAH…TLIQKHDWFF (193 aa)). 6 disordered regions span residues 1330–1381 (VHEE…SGKD), 1396–1416 (ASRK…EDEL), 1512–1540 (QMEE…PKVV), 1573–1598 (LDPN…DERS), 1626–1658 (RQHR…TPRL), and 1827–1915 (STSE…LSGT). A compositionally biased stretch (polar residues) spans 1512–1534 (QMEESMSDSGTMLSNSSQASAQR). Composition is skewed to polar residues over residues 1639–1653 (VQAN…TEGS) and 1866–1902 (TADI…NNFS).

It localises to the golgi apparatus membrane. The protein resides in the cell junction. Its subcellular location is the cytoplasmic vesicle membrane. It is found in the cytoplasm. The protein localises to the cytoskeleton. GTPase-activating protein (GAP) for rhoa and cdc42. The sequence is that of Rho GTPase-activating protein 21-A (arhgap21-a) from Xenopus laevis (African clawed frog).